The following is a 590-amino-acid chain: Leukocyte immunoglobulin-like receptor subfamily B member 5 (590 aa).

A signal peptide spans 1 to 23; sequence MTLTLSVLICLGLSVGPRTCVQA. Residues 24 to 458 are Extracellular-facing; the sequence is GTLPKPTLWA…PQSGLGRHLG (435 aa). 4 Ig-like C2-type domains span residues 27-116, 111-228, 224-313, and 337-418; these read PKPT…LELV, DPLE…SLLI, PSLL…DPLD, and GENV…LVVS. Cysteines 49 and 98 form a disulfide. Asn-139 carries an N-linked (GlcNAc...) asparagine glycan. Disulfide bonds link Cys-144/Cys-195 and Cys-244/Cys-295. Residues Asn-279 and Asn-339 are each glycosylated (N-linked (GlcNAc...) asparagine). A disulfide bond links Cys-344 and Cys-395. Residues 416 to 433 show a composition bias toward low complexity; it reads VVSGPSGDPSLSPTGSTP. The interval 416–449 is disordered; the sequence is VVSGPSGDPSLSPTGSTPTPGPEDQPLTPTGLDP. The helical transmembrane segment at 459–479 threads the bilayer; the sequence is VVTGVSVAFVLLLFLLLFLLL. The Cytoplasmic portion of the chain corresponds to 480 to 590; that stretch reads RHRHQSKHRT…PSIYAPLAIH (111 aa). Disordered stretches follow at residues 488-514 and 529-550; these read RTSA…KRAS and KDTQ…EAPQ. Position 514 is a phosphoserine (Ser-514). Residues 552–557 carry the ITIM motif 1 motif; the sequence is VTYAQL. Residues 562-578 show a composition bias toward basic and acidic residues; that stretch reads LRREATEPPPSQEREPP. The disordered stretch occupies residues 562 to 590; sequence LRREATEPPPSQEREPPAEPSIYAPLAIH. The short motif at 582-587 is the ITIM motif 2 element; sequence SIYAPL.

In terms of tissue distribution, detected in a natural killer (NK) cells.

The protein resides in the membrane. Its function is as follows. May act as receptor for class I MHC antigens. This is Leukocyte immunoglobulin-like receptor subfamily B member 5 (LILRB5) from Homo sapiens (Human).